The chain runs to 359 residues: 4-hydroxy-2-oxovalerate aldolase 1 (359 aa).

Residues 23–275 enclose the Pyruvate carboxyltransferase domain; the sequence is VRVTDTSLRD…KTGIDFFDIA (253 aa). A substrate-binding site is contributed by 31–32; sequence RD. Asp-32 is a binding site for Mn(2+). The active-site Proton acceptor is His-35. Residues Ser-185 and His-214 each contribute to the substrate site. Mn(2+) is bound by residues His-214 and His-216. Tyr-305 serves as a coordination point for substrate.

It belongs to the 4-hydroxy-2-oxovalerate aldolase family.

It carries out the reaction (S)-4-hydroxy-2-oxopentanoate = acetaldehyde + pyruvate. In Mycobacteroides abscessus (strain ATCC 19977 / DSM 44196 / CCUG 20993 / CIP 104536 / JCM 13569 / NCTC 13031 / TMC 1543 / L948) (Mycobacterium abscessus), this protein is 4-hydroxy-2-oxovalerate aldolase 1.